A 465-amino-acid polypeptide reads, in one-letter code: tRNA-2-methylthio-N(6)-dimethylallyladenosine synthase (465 aa).

The region spanning 18–136 is the MTTase N-terminal domain; it reads RKLYIETYGC…LPNLVGAAEQ (119 aa). Cysteine 27, cysteine 63, cysteine 100, cysteine 174, cysteine 178, and cysteine 181 together coordinate [4Fe-4S] cluster. The Radical SAM core domain maps to 160–392; the sequence is GGVHINGFVS…IALQNRLSEE (233 aa). Residues 395-458 enclose the TRAM domain; that stretch reads KRDISKTFEV…SATLFGEVVE (64 aa).

The protein belongs to the methylthiotransferase family. MiaB subfamily. As to quaternary structure, monomer. Requires [4Fe-4S] cluster as cofactor.

It is found in the cytoplasm. The catalysed reaction is N(6)-dimethylallyladenosine(37) in tRNA + (sulfur carrier)-SH + AH2 + 2 S-adenosyl-L-methionine = 2-methylsulfanyl-N(6)-dimethylallyladenosine(37) in tRNA + (sulfur carrier)-H + 5'-deoxyadenosine + L-methionine + A + S-adenosyl-L-homocysteine + 2 H(+). Functionally, catalyzes the methylthiolation of N6-(dimethylallyl)adenosine (i(6)A), leading to the formation of 2-methylthio-N6-(dimethylallyl)adenosine (ms(2)i(6)A) at position 37 in tRNAs that read codons beginning with uridine. This chain is tRNA-2-methylthio-N(6)-dimethylallyladenosine synthase, found in Porphyromonas gingivalis (strain ATCC 33277 / DSM 20709 / CIP 103683 / JCM 12257 / NCTC 11834 / 2561).